A 163-amino-acid chain; its full sequence is Crossover junction endodeoxyribonuclease RuvC (163 aa).

Catalysis depends on residues aspartate 7, glutamate 68, and histidine 142. Aspartate 7, glutamate 68, and histidine 142 together coordinate Mg(2+).

This sequence belongs to the RuvC family. In terms of assembly, homodimer which binds Holliday junction (HJ) DNA. The HJ becomes 2-fold symmetrical on binding to RuvC with unstacked arms; it has a different conformation from HJ DNA in complex with RuvA. In the full resolvosome a probable DNA-RuvA(4)-RuvB(12)-RuvC(2) complex forms which resolves the HJ. Mg(2+) is required as a cofactor.

The protein localises to the cytoplasm. The enzyme catalyses Endonucleolytic cleavage at a junction such as a reciprocal single-stranded crossover between two homologous DNA duplexes (Holliday junction).. The RuvA-RuvB-RuvC complex processes Holliday junction (HJ) DNA during genetic recombination and DNA repair. Endonuclease that resolves HJ intermediates. Cleaves cruciform DNA by making single-stranded nicks across the HJ at symmetrical positions within the homologous arms, yielding a 5'-phosphate and a 3'-hydroxyl group; requires a central core of homology in the junction. The consensus cleavage sequence is 5'-(A/T)TT(C/G)-3'. Cleavage occurs on the 3'-side of the TT dinucleotide at the point of strand exchange. HJ branch migration catalyzed by RuvA-RuvB allows RuvC to scan DNA until it finds its consensus sequence, where it cleaves and resolves the cruciform DNA. This chain is Crossover junction endodeoxyribonuclease RuvC, found in Anaplasma phagocytophilum (strain HZ).